Reading from the N-terminus, the 179-residue chain is Large ribosomal subunit protein uL5 (179 aa).

The protein belongs to the universal ribosomal protein uL5 family. As to quaternary structure, part of the 50S ribosomal subunit; part of the 5S rRNA/L5/L18/L25 subcomplex. Contacts the 5S rRNA and the P site tRNA. Forms a bridge to the 30S subunit in the 70S ribosome.

This is one of the proteins that bind and probably mediate the attachment of the 5S RNA into the large ribosomal subunit, where it forms part of the central protuberance. In the 70S ribosome it contacts protein S13 of the 30S subunit (bridge B1b), connecting the 2 subunits; this bridge is implicated in subunit movement. Contacts the P site tRNA; the 5S rRNA and some of its associated proteins might help stabilize positioning of ribosome-bound tRNAs. This Staphylococcus carnosus (strain TM300) protein is Large ribosomal subunit protein uL5.